The sequence spans 465 residues: MSDQPPAENADVRQRRAPESPVTERLRAPARDDARPTSDESDMEGILQDEDSDAGSKNKEEKLERLTQAIPQDKGSLGVFADSMLEALPPRWRNWVVRGLFSIIMISTFTFIVTRGATWLMFLVFLIQFKCFQEIISIGLAVYRLYDFPWFRALSWYFLLTSNYFFFGESLIDYWGIVLKKDNFLHFLVAYHRLVSFALYCIGFVSFVLSLRKGYYMRQFSLFAWTHLTLLLIVSQSFFIIQNIFQGLIWFLAPVAMIICCDIMSYMFGFFWGKTPLIKLSPKKTWEGFIGGAFSTVVFGILLSLALYNRPFFVCPVQHYQTDSSNCTIPLAFQLQDYPVPRPFSFVYKILRKEPIIQLCPFVFHSIALSLFASILGPFGGFFASGFKRAFKIKDFGDVIPGHGGLMDRFDCQLLMGTFVMVYIHSFIRVPDASKLLKQIMTLEPQDQLNIFNLLQSELSKTGLI.

A disordered region spans residues 1–60; sequence MSDQPPAENADVRQRRAPESPVTERLRAPARDDARPTSDESDMEGILQDEDSDAGSKNKE. Positions 10 to 38 are enriched in basic and acidic residues; that stretch reads ADVRQRRAPESPVTERLRAPARDDARPTS. Residues 39–53 are compositionally biased toward acidic residues; it reads DESDMEGILQDEDSD. The next 8 membrane-spanning stretches (helical) occupy residues 95–117, 121–143, 158–178, 187–207, 214–234, 239–259, 288–308, and 367–387; these read WVVR…TRGA, MFLV…LAVY, FLLT…WGIV, FLVA…FVSF, GYYM…LLIV, FIIQ…AMII, GFIG…LALY, and IALS…ASGF.

The protein belongs to the CDS family.

The protein localises to the membrane. The enzyme catalyses a 1,2-diacyl-sn-glycero-3-phosphate + CTP + H(+) = a CDP-1,2-diacyl-sn-glycerol + diphosphate. The protein operates within phospholipid metabolism; CDP-diacylglycerol biosynthesis; CDP-diacylglycerol from sn-glycerol 3-phosphate: step 3/3. Functionally, provides CDP-diacylglycerol, an important precursor for the synthesis of phosphatidylinositol (PtdIns). This Caenorhabditis elegans protein is Phosphatidate cytidylyltransferase (cdgs-1).